The sequence spans 904 residues: Copper-transporting ATPase ccc2 (904 aa).

The Cytoplasmic portion of the chain corresponds to 1 to 172 (MYTTTLSVQG…GSQIRVWKIR (172 aa)). The HMA domain occupies 2-68 (YTTTLSVQGM…KIEDCGFDAS (67 aa)). Residues Cys13 and Cys16 each coordinate Cu(+). Residues 173-193 (FIISISFSLAVMFLPQIFDSC) traverse the membrane as a helical segment. Residues 194-197 (DSMR) are Lumenal, vesicle-facing. The helical transmembrane segment at 198–218 (AAFLVPHYFGICAGHIISLVL) threads the bilayer. Residues 219–246 (SLPVQFGVGRVYYSAAYHALKRGTANMD) are Cytoplasmic-facing. A helical membrane pass occupies residues 247 to 267 (VLVSLGSTVAFAASIFFMILY). The Lumenal, vesicle segment spans residues 268 to 278 (SARHADNPAPI). A helical membrane pass occupies residues 279 to 296 (FFDTADMLLTFVTLGRYL). At 297 to 431 (ESKAKGSTSA…PIQQFADRVA (135 aa)) the chain is on the cytoplasmic side. A helical membrane pass occupies residues 432 to 452 (GIFVPVIVALSISTFTFWFLF). The Lumenal, vesicle segment spans residues 453–469 (TKYSSKYPSVFDDPMGK). A helical membrane pass occupies residues 470-490 (FAVCLKLTISVVVVACPCALG). Over 491 to 805 (LSTPTAVMVG…RIKMNLVWAC (315 aa)) the chain is Cytoplasmic. The active-site 4-aspartylphosphate intermediate is the Asp529. Residues Asp742 and Asp746 each contribute to the Mg(2+) site. Residues 806–826 (IYNFVMIPIAMGFFLPWGIYL) form a helical membrane-spanning segment. Topologically, residues 827–828 (NP) are lumenal, vesicle. A helical membrane pass occupies residues 829–849 (MWASAAMMFSSLSVLASSLLL). Residues 850-904 (RRWKKPKSLIFSEADDVETESSTNSSVLQKVYTATRSIFGRNKSSNKYQPVANEV) lie on the Cytoplasmic side of the membrane.

This sequence belongs to the cation transport ATPase (P-type) (TC 3.A.3) family. Type IB subfamily.

The protein localises to the golgi apparatus. The protein resides in the trans-Golgi network membrane. It catalyses the reaction Cu(+)(in) + ATP + H2O = Cu(+)(out) + ADP + phosphate + H(+). Probably involved in copper transport and in the regulation of cellular copper level. Retrieves copper from the metallochaperone atx1 and incorporates it into trans-Golgi vesicles. The sequence is that of Copper-transporting ATPase ccc2 (ccc2) from Schizosaccharomyces pombe (strain 972 / ATCC 24843) (Fission yeast).